Consider the following 178-residue polypeptide: uncharacterized protein (178 aa).

The first 23 residues, 1–23 (MNYSVIWAITILILGLVLTLAWA), serve as a signal peptide directing secretion.

This is an uncharacterized protein from Invertebrate iridescent virus 3 (IIV-3).